A 327-amino-acid polypeptide reads, in one-letter code: Aspartate--ammonia ligase (327 aa).

It belongs to the class-II aminoacyl-tRNA synthetase family. AsnA subfamily.

The protein resides in the cytoplasm. The catalysed reaction is L-aspartate + NH4(+) + ATP = L-asparagine + AMP + diphosphate + H(+). Its pathway is amino-acid biosynthesis; L-asparagine biosynthesis; L-asparagine from L-aspartate (ammonia route): step 1/1. The polypeptide is Aspartate--ammonia ligase (Fusobacterium nucleatum subsp. nucleatum (strain ATCC 25586 / DSM 15643 / BCRC 10681 / CIP 101130 / JCM 8532 / KCTC 2640 / LMG 13131 / VPI 4355)).